The chain runs to 371 residues: Queuine tRNA-ribosyltransferase (371 aa).

Asp-90 functions as the Proton acceptor in the catalytic mechanism. Residues Asp-90–Phe-94, Asp-144, Gln-188, and Gly-215 contribute to the substrate site. The interval Gly-246–Asp-252 is RNA binding. Catalysis depends on Asp-265, which acts as the Nucleophile. Positions Thr-270–Arg-274 are RNA binding; important for wobble base 34 recognition. Cys-303, Cys-305, Cys-308, and His-334 together coordinate Zn(2+).

The protein belongs to the queuine tRNA-ribosyltransferase family. Homodimer. Within each dimer, one monomer is responsible for RNA recognition and catalysis, while the other monomer binds to the replacement base PreQ1. It depends on Zn(2+) as a cofactor.

The catalysed reaction is 7-aminomethyl-7-carbaguanine + guanosine(34) in tRNA = 7-aminomethyl-7-carbaguanosine(34) in tRNA + guanine. It participates in tRNA modification; tRNA-queuosine biosynthesis. Functionally, catalyzes the base-exchange of a guanine (G) residue with the queuine precursor 7-aminomethyl-7-deazaguanine (PreQ1) at position 34 (anticodon wobble position) in tRNAs with GU(N) anticodons (tRNA-Asp, -Asn, -His and -Tyr). Catalysis occurs through a double-displacement mechanism. The nucleophile active site attacks the C1' of nucleotide 34 to detach the guanine base from the RNA, forming a covalent enzyme-RNA intermediate. The proton acceptor active site deprotonates the incoming PreQ1, allowing a nucleophilic attack on the C1' of the ribose to form the product. After dissociation, two additional enzymatic reactions on the tRNA convert PreQ1 to queuine (Q), resulting in the hypermodified nucleoside queuosine (7-(((4,5-cis-dihydroxy-2-cyclopenten-1-yl)amino)methyl)-7-deazaguanosine). This Neisseria meningitidis serogroup B (strain ATCC BAA-335 / MC58) protein is Queuine tRNA-ribosyltransferase.